A 461-amino-acid polypeptide reads, in one-letter code: Diaboline synthase (461 aa).

Catalysis depends on proton acceptor residues H185 and D400.

It belongs to the plant acyltransferase family. As to quaternary structure, monomer.

The protein resides in the cytoplasm. It carries out the reaction 17,18-epoxy-17-hydroxycur-19-ene + acetyl-CoA = diaboline + CoA. Its pathway is alkaloid biosynthesis. Acetyltransferase involved in the biosynthesis of curare monoterpene indole alkaloids (MIAs), natural products such as diaboline, a pharmacologically active compound used to regulate blood pressure. Curare alkaloids act as animal glycine receptor antagonists. Catalyzes the conversion of 17,18-epoxy-17-hydroxycur-19-ene (Wieland-Gumlich aldehyde) to diaboline. This chain is Diaboline synthase, found in Strychnos sp.